Consider the following 368-residue polypeptide: Isocitrate dehydrogenase [NAD] regulatory subunit 3, mitochondrial (368 aa).

A mitochondrion-targeting transit peptide spans 1–26 (MARRSVSIFNRLLANPPSPFTSLSRS).

The protein belongs to the isocitrate and isopropylmalate dehydrogenases family. As to quaternary structure, heterooligomer of catalytic and regulatory subunits. Interacts with 14-3-3-like proteins GRF1 GRF3 and GRF8. As to expression, mainly expressed at a low level in pollen.

The protein resides in the mitochondrion. Its function is as follows. Performs an essential role in the oxidative function of the citric acid cycle. In Arabidopsis thaliana (Mouse-ear cress), this protein is Isocitrate dehydrogenase [NAD] regulatory subunit 3, mitochondrial (IDH3).